The sequence spans 870 residues: Leucine--tRNA ligase (870 aa).

Residues 36–46 (PYPSGKIHLGH) carry the 'HIGH' region motif. The 'KMSKS' region signature appears at 602–606 (KMSKS). Lysine 605 serves as a coordination point for ATP.

It belongs to the class-I aminoacyl-tRNA synthetase family.

It localises to the cytoplasm. It carries out the reaction tRNA(Leu) + L-leucine + ATP = L-leucyl-tRNA(Leu) + AMP + diphosphate. The polypeptide is Leucine--tRNA ligase (Rickettsia akari (strain Hartford)).